A 144-amino-acid polypeptide reads, in one-letter code: 3-hydroxyacyl-[acyl-carrier-protein] dehydratase FabZ (144 aa).

H51 is an active-site residue.

This sequence belongs to the thioester dehydratase family. FabZ subfamily.

The protein resides in the cytoplasm. It carries out the reaction a (3R)-hydroxyacyl-[ACP] = a (2E)-enoyl-[ACP] + H2O. Involved in unsaturated fatty acids biosynthesis. Catalyzes the dehydration of short chain beta-hydroxyacyl-ACPs and long chain saturated and unsaturated beta-hydroxyacyl-ACPs. This Lactococcus lactis subsp. lactis (strain IL1403) (Streptococcus lactis) protein is 3-hydroxyacyl-[acyl-carrier-protein] dehydratase FabZ (fabZ2).